The chain runs to 299 residues: Bifunctional protein FolD (299 aa).

Residues 166–168, Ser191, and Ile232 contribute to the NADP(+) site; that span reads GRS.

The protein belongs to the tetrahydrofolate dehydrogenase/cyclohydrolase family. As to quaternary structure, homodimer.

It carries out the reaction (6R)-5,10-methylene-5,6,7,8-tetrahydrofolate + NADP(+) = (6R)-5,10-methenyltetrahydrofolate + NADPH. It catalyses the reaction (6R)-5,10-methenyltetrahydrofolate + H2O = (6R)-10-formyltetrahydrofolate + H(+). It participates in one-carbon metabolism; tetrahydrofolate interconversion. Functionally, catalyzes the oxidation of 5,10-methylenetetrahydrofolate to 5,10-methenyltetrahydrofolate and then the hydrolysis of 5,10-methenyltetrahydrofolate to 10-formyltetrahydrofolate. This chain is Bifunctional protein FolD, found in Dinoroseobacter shibae (strain DSM 16493 / NCIMB 14021 / DFL 12).